Reading from the N-terminus, the 354-residue chain is Heme A synthase (354 aa).

8 consecutive transmembrane segments (helical) span residues 21 to 41 (VAVWLLACCFMVAVMVLLGGL), 106 to 126 (VWGRLIGVVFGLPFLWLALSG), 139 to 159 (VFLLGAAQGGMGWFMVKSGLV), 171 to 191 (AHLALAFLIHGWMFWLALDIL), 212 to 232 (MLGLTGLVIVTLLFGGLVAGL), 268 to 288 (VQFGHRTLAEITIVVALVGWF), 304 to 324 (AVGLMALLQVGLGIGTLVMVV), and 326 to 346 (VWLASAHQMGAMALLTLCLWA). Residue His272 coordinates heme. His332 is a heme binding site.

Belongs to the COX15/CtaA family. Type 2 subfamily. In terms of assembly, interacts with CtaB. Heme b is required as a cofactor.

The protein resides in the cell membrane. It carries out the reaction Fe(II)-heme o + 2 A + H2O = Fe(II)-heme a + 2 AH2. It participates in porphyrin-containing compound metabolism; heme A biosynthesis; heme A from heme O: step 1/1. In terms of biological role, catalyzes the conversion of heme O to heme A by two successive hydroxylations of the methyl group at C8. The first hydroxylation forms heme I, the second hydroxylation results in an unstable dihydroxymethyl group, which spontaneously dehydrates, resulting in the formyl group of heme A. This is Heme A synthase from Paramagnetospirillum magneticum (strain ATCC 700264 / AMB-1) (Magnetospirillum magneticum).